We begin with the raw amino-acid sequence, 155 residues long: Pathogenesis-related protein B (155 aa).

This sequence belongs to the BetVI family.

This is Pathogenesis-related protein B (PCPR1-3) from Petroselinum crispum (Parsley).